The following is a 215-amino-acid chain: Cytidylate kinase (215 aa).

10-18 (GPAASGKGT) is an ATP binding site.

It belongs to the cytidylate kinase family. Type 1 subfamily.

It localises to the cytoplasm. It catalyses the reaction CMP + ATP = CDP + ADP. The enzyme catalyses dCMP + ATP = dCDP + ADP. The protein is Cytidylate kinase of Bartonella quintana (strain Toulouse) (Rochalimaea quintana).